Consider the following 159-residue polypeptide: NADH-quinone oxidoreductase subunit B (159 aa).

The [4Fe-4S] cluster site is built by C32, C33, C97, and C126.

Belongs to the complex I 20 kDa subunit family. In terms of assembly, NDH-1 is composed of 14 different subunits. Subunits NuoB, C, D, E, F, and G constitute the peripheral sector of the complex. [4Fe-4S] cluster is required as a cofactor.

It localises to the cell inner membrane. The catalysed reaction is a quinone + NADH + 5 H(+)(in) = a quinol + NAD(+) + 4 H(+)(out). In terms of biological role, NDH-1 shuttles electrons from NADH, via FMN and iron-sulfur (Fe-S) centers, to quinones in the respiratory chain. The immediate electron acceptor for the enzyme in this species is believed to be ubiquinone. Couples the redox reaction to proton translocation (for every two electrons transferred, four hydrogen ions are translocated across the cytoplasmic membrane), and thus conserves the redox energy in a proton gradient. In Helicobacter pylori (strain P12), this protein is NADH-quinone oxidoreductase subunit B.